Consider the following 200-residue polypeptide: Glutathione S-transferase 1-1 (200 aa).

The GST N-terminal domain occupies 1–73 (GSSPCRSVIM…YLVEKYGKTD (73 aa)). Residues Ser2, 43–45 (HTI), and 57–59 (ESR) contribute to the glutathione site. Residues 79-200 (CPKKRAVINQ…AGCLEFKKFF (122 aa)) form the GST C-terminal domain.

This sequence belongs to the GST superfamily. Theta family. Homodimer.

It carries out the reaction RX + glutathione = an S-substituted glutathione + a halide anion + H(+). The enzyme catalyses 1,1,1-trichloro-2,2-bis(4-chlorophenyl)ethane = 1,1-dichloro-2,2-bis(4-chlorophenyl)ethylene + chloride + H(+). Functionally, conjugation of reduced glutathione to a wide number of exogenous and endogenous hydrophobic electrophiles. Has DDT dehydrochlorinase activity. This chain is Glutathione S-transferase 1-1 (GstD1), found in Drosophila mauritiana (Fruit fly).